Consider the following 64-residue polypeptide: Large ribosomal subunit protein bL32 (64 aa).

The tract at residues M1–E35 is disordered.

It belongs to the bacterial ribosomal protein bL32 family.

This Xanthomonas axonopodis pv. citri (strain 306) protein is Large ribosomal subunit protein bL32.